The sequence spans 154 residues: Small ribosomal subunit protein uS15 (154 aa).

Over residues 1-14 the composition is skewed to basic residues; it reads MAPVPHRSRHKKGR. The segment at 1 to 24 is disordered; it reads MAPVPHRSRHKKGRSGSVRPAHPT.

The protein belongs to the universal ribosomal protein uS15 family. In terms of assembly, part of the 30S ribosomal subunit.

The polypeptide is Small ribosomal subunit protein uS15 (Pyrobaculum arsenaticum (strain DSM 13514 / JCM 11321 / PZ6)).